A 1273-amino-acid polypeptide reads, in one-letter code: Chitin synthase 7 (1273 aa).

The interval 1 to 69 is disordered; sequence MPAVERNAPF…LINPSSGGPG (69 aa). Residues 1 to 79 are Cytoplasmic-facing; sequence MPAVERNAPF…FSAASRSKHR (79 aa). The helical transmembrane segment at 80 to 100 threads the bilayer; that stretch reads FSWWTAFSLFVTFWAPSPLLS. The Extracellular portion of the chain corresponds to 101 to 117; sequence SCCGLKDKQSRQAWREK. A helical membrane pass occupies residues 118 to 138; that stretch reads VSLVFIAILLGGFIGFITMGL. At 139 to 360 the chain is on the cytoplasmic side; the sequence is NAALCPSASS…FISNLVLYCS (222 aa). A helical membrane pass occupies residues 361-381; that stretch reads LVVILAIVLIRFFMAVWFAWF. The Extracellular segment spans residues 382 to 820; that stretch reads MAGRMSSPPR…LCGTFCFSMQ (439 aa). The N-linked (GlcNAc...) asparagine glycan is linked to Asn412. Residues 416 to 451 form a disordered region; sequence AAPWANKQRPPPSQPARRRRDSAQSATPSVPDSLSV. 2 N-linked (GlcNAc...) asparagine glycosylation sites follow: Asn667 and Asn796. The helical transmembrane segment at 821–841 threads the bilayer; that stretch reads FVVFMDLLGTAVLPISIALTY. At 842 to 857 the chain is on the cytoplasmic side; that stretch reads TLVVTYCLNPPHSFTE. Residues 858 to 878 form a helical membrane-spanning segment; that stretch reads AIPLMLLVAVIGMPALLILLA. Topologically, residues 879–881 are extracellular; sequence TRK. The helical transmembrane segment at 882–902 threads the bilayer; it reads VVYVLWMLIYLLALPVWNFVL. The Cytoplasmic portion of the chain corresponds to 903–1273; that stretch reads PVYSFWHFDD…RGRSYHDRFS (371 aa). Disordered stretches follow at residues 966 to 1009 and 1126 to 1273; these read RELE…SVTV and NGGG…DRFS. Residues 1000-1009 show a composition bias toward low complexity; the sequence is SDSFSDSVTV. A compositionally biased stretch (pro residues) spans 1215-1232; the sequence is QHPPQPSQPPQPPQPAQP. Positions 1233–1246 are enriched in low complexity; the sequence is TRPGGAPAAPPRGA.

It belongs to the chitin synthase family. Class IV subfamily.

It is found in the cell membrane. The protein resides in the cytoplasmic vesicle membrane. It carries out the reaction [(1-&gt;4)-N-acetyl-beta-D-glucosaminyl](n) + UDP-N-acetyl-alpha-D-glucosamine = [(1-&gt;4)-N-acetyl-beta-D-glucosaminyl](n+1) + UDP + H(+). Its function is as follows. Polymerizes chitin, a structural polymer of the cell wall and septum, by transferring the sugar moiety of UDP-GlcNAc to the non-reducing end of the growing chitin polymer. This is Chitin synthase 7 from Mycosarcoma maydis (Corn smut fungus).